Here is a 273-residue protein sequence, read N- to C-terminus: Dermonecrotic toxin SdSicTox-betaIIB1bxiv (273 aa).

His-4 is a catalytic residue. 2 residues coordinate Mg(2+): Glu-24 and Asp-26. The Nucleophile role is filled by His-40. Intrachain disulfides connect Cys-44–Cys-50 and Cys-46–Cys-189. Asp-84 contacts Mg(2+).

The protein belongs to the arthropod phospholipase D family. Class II subfamily. Mg(2+) is required as a cofactor. As to expression, expressed by the venom gland.

Its subcellular location is the secreted. The enzyme catalyses an N-(acyl)-sphingosylphosphocholine = an N-(acyl)-sphingosyl-1,3-cyclic phosphate + choline. It carries out the reaction an N-(acyl)-sphingosylphosphoethanolamine = an N-(acyl)-sphingosyl-1,3-cyclic phosphate + ethanolamine. The catalysed reaction is a 1-acyl-sn-glycero-3-phosphocholine = a 1-acyl-sn-glycero-2,3-cyclic phosphate + choline. It catalyses the reaction a 1-acyl-sn-glycero-3-phosphoethanolamine = a 1-acyl-sn-glycero-2,3-cyclic phosphate + ethanolamine. Dermonecrotic toxins cleave the phosphodiester linkage between the phosphate and headgroup of certain phospholipids (sphingolipid and lysolipid substrates), forming an alcohol (often choline) and a cyclic phosphate. This toxin acts on sphingomyelin (SM). It may also act on ceramide phosphoethanolamine (CPE), lysophosphatidylcholine (LPC) and lysophosphatidylethanolamine (LPE), but not on lysophosphatidylserine (LPS), and lysophosphatidylglycerol (LPG). It acts by transphosphatidylation, releasing exclusively cyclic phosphate products as second products. Induces dermonecrosis, hemolysis, increased vascular permeability, edema, inflammatory response, and platelet aggregation. This Sicarius cf. damarensis (strain GJB-2008) (Six-eyed sand spider) protein is Dermonecrotic toxin SdSicTox-betaIIB1bxiv.